Reading from the N-terminus, the 186-residue chain is ATP synthase subunit delta, chloroplastic (186 aa).

This sequence belongs to the ATPase delta chain family. As to quaternary structure, F-type ATPases have 2 components, F(1) - the catalytic core - and F(0) - the membrane proton channel. F(1) has five subunits: alpha(3), beta(3), gamma(1), delta(1), epsilon(1). CF(0) has four main subunits: a(1), b(1), b'(1) and c(10-14). The alpha and beta chains form an alternating ring which encloses part of the gamma chain. F(1) is attached to F(0) by a central stalk formed by the gamma and epsilon chains, while a peripheral stalk is formed by the delta, b and b' chains.

The protein resides in the plastid. It localises to the chloroplast thylakoid membrane. Its function is as follows. F(1)F(0) ATP synthase produces ATP from ADP in the presence of a proton or sodium gradient. F-type ATPases consist of two structural domains, F(1) containing the extramembraneous catalytic core and F(0) containing the membrane proton channel, linked together by a central stalk and a peripheral stalk. During catalysis, ATP synthesis in the catalytic domain of F(1) is coupled via a rotary mechanism of the central stalk subunits to proton translocation. In terms of biological role, this protein is part of the stalk that links CF(0) to CF(1). It either transmits conformational changes from CF(0) to CF(1) or is implicated in proton conduction. This is ATP synthase subunit delta, chloroplastic from Porphyra purpurea (Red seaweed).